The chain runs to 291 residues: Pantothenate synthetase (291 aa).

33–40 (MGALHEGH) is a binding site for ATP. The active-site Proton donor is H40. A (R)-pantoate-binding site is contributed by Q64. Residue Q64 coordinates beta-alanine. Residue 157–160 (GEKD) participates in ATP binding. Q163 contacts (R)-pantoate. ATP contacts are provided by residues V186 and 194–197 (LSSR).

Belongs to the pantothenate synthetase family. In terms of assembly, homodimer.

Its subcellular location is the cytoplasm. The catalysed reaction is (R)-pantoate + beta-alanine + ATP = (R)-pantothenate + AMP + diphosphate + H(+). It participates in cofactor biosynthesis; (R)-pantothenate biosynthesis; (R)-pantothenate from (R)-pantoate and beta-alanine: step 1/1. In terms of biological role, catalyzes the condensation of pantoate with beta-alanine in an ATP-dependent reaction via a pantoyl-adenylate intermediate. The polypeptide is Pantothenate synthetase (Rubrobacter xylanophilus (strain DSM 9941 / JCM 11954 / NBRC 16129 / PRD-1)).